A 60-amino-acid chain; its full sequence is Large ribosomal subunit protein uL30 (60 aa).

This sequence belongs to the universal ribosomal protein uL30 family. As to quaternary structure, part of the 50S ribosomal subunit.

In Streptomyces filamentosus (Streptomyces roseosporus), this protein is Large ribosomal subunit protein uL30.